Reading from the N-terminus, the 541-residue chain is GPI alpha-1,2-mannosyltransferase 3 (541 aa).

An N-linked (GlcNAc...) asparagine glycan is attached at Asn-18. Transmembrane regions (helical) follow at residues 53–73, 126–146, 182–202, 214–234, 245–265, 305–325, 330–350, 352–372, and 377–397; these read LVLF…TSFV, VHLL…IADL, LTNT…PLEG, LVAL…PLLF, DLIL…SLII, GFPA…FLAP, IFLV…HKEF, FIYP…NNLK, and PALS…GLVH. The N-linked (GlcNAc...) asparagine glycan is linked to Asn-417.

It belongs to the glycosyltransferase 22 family. PIGB subfamily.

It is found in the endoplasmic reticulum membrane. The protein operates within glycolipid biosynthesis; glycosylphosphatidylinositol-anchor biosynthesis. Alpha-1,2-mannosyltransferase that catalyzes the transfer of the third mannose, via an alpha-1,2 bond, from a dolichol-phosphate-mannose (Dol-P-Man) to an alpha-D-Man-(1-&gt;6)-2-PEtn-alpha-D-Man-(1-&gt;4)-alpha-D-GlcN-(1-&gt;6)-(1-radyl,2-acyl-sn-glycero-3-phospho)-2-acyl-inositol intermediate to generate an alpha-D-Man-(1-&gt;2)-alpha-D-Man-(1-&gt;6)-2-PEtn-alpha-D-Man-(1-&gt;4)-alpha-D-GlcN-(1-&gt;6)-(1-radyl,2-acyl-sn-glycero-3-phospho)-2-acyl-inositol (also termed H6) and participates in the nineth step of the glycosylphosphatidylinositol-anchor biosynthesis. May also add the third mannose to an alpha-D-Man-(1-&gt;6)-alpha-D-Man-(1-&gt;4)-alpha-D-GlcN-(1-&gt;6)-(1-radyl,2-acyl-sn-glycero-3-phospho)-2-acyl-inositol (also termed H3) intermediate generating an alpha-D-Man-(1-&gt;2)-alpha-D-Man-(1-&gt;6)-alpha-D-Man-(1-&gt;4)-alpha-D-GlcN-(1-&gt;6)-(1-radyl,2-acyl-sn-glycero-3-phospho)-2-acyl-inositol (also termed H4). This Bos taurus (Bovine) protein is GPI alpha-1,2-mannosyltransferase 3.